The chain runs to 1047 residues: Atrial natriuretic peptide receptor 2 (1047 aa).

Positions 1-22 (MALPSLLLLVAALAGGVRPPGA) are cleaved as a signal peptide. Over 23 to 458 (RNLTLAVVLP…DKTPLSTLAI (436 aa)) the chain is Extracellular. Residues N24 and N35 are each glycosylated (N-linked (GlcNAc...) asparagine). Residues C75 and C101 are joined by a disulfide bond. Residues N161, N195, N244, N277, and N349 are each glycosylated (N-linked (GlcNAc...) asparagine). A helical membrane pass occupies residues 459–478 (VALGTGITFIMFGVSSFLIF). Topologically, residues 479–1047 (RKLMLEKELA…GERKGPPGLL (569 aa)) are cytoplasmic. A Phosphoserine modification is found at S513. Positions 513-786 (SRLTLSLRGS…PDFGQIKGFI (274 aa)) constitute a Protein kinase domain. Residue T516 is modified to Phosphothreonine. S518, S522, S523, and S526 each carry phosphoserine. Position 529 is a phosphothreonine (T529). A Guanylate cyclase domain is found at 861 to 991 (TIYFSDIVGF…DTVNTASRME (131 aa)).

This sequence belongs to the adenylyl cyclase class-4/guanylyl cyclase family. Post-translationally, phosphorylated. Phosphorylation of the protein kinase-like domain is required for full activation by CNP. Glycosylated.

The protein resides in the cell membrane. It carries out the reaction GTP = 3',5'-cyclic GMP + diphosphate. Functionally, receptor for the C-type natriuretic peptide NPPC/CNP hormone. Has guanylate cyclase activity upon binding of its ligand. May play a role in the regulation of skeletal growth. The polypeptide is Atrial natriuretic peptide receptor 2 (NPR2) (Homo sapiens (Human)).